Here is a 601-residue protein sequence, read N- to C-terminus: Elongation factor 4 (601 aa).

In terms of domain architecture, tr-type G spans 7-189 (RNIRNFSIIA…AIVHRIPPPK (183 aa)). GTP contacts are provided by residues 19 to 24 (DHGKST) and 136 to 139 (NKID).

It belongs to the TRAFAC class translation factor GTPase superfamily. Classic translation factor GTPase family. LepA subfamily.

The protein localises to the cell inner membrane. The enzyme catalyses GTP + H2O = GDP + phosphate + H(+). Required for accurate and efficient protein synthesis under certain stress conditions. May act as a fidelity factor of the translation reaction, by catalyzing a one-codon backward translocation of tRNAs on improperly translocated ribosomes. Back-translocation proceeds from a post-translocation (POST) complex to a pre-translocation (PRE) complex, thus giving elongation factor G a second chance to translocate the tRNAs correctly. Binds to ribosomes in a GTP-dependent manner. The sequence is that of Elongation factor 4 from Xanthomonas campestris pv. campestris (strain ATCC 33913 / DSM 3586 / NCPPB 528 / LMG 568 / P 25).